The chain runs to 90 residues: Defensin-like protein 193 (90 aa).

The signal sequence occupies residues 1 to 27 (MAMKSVSTLAVFAILFLVIVEMPEIKA). 4 disulfides stabilise this stretch: Cys32/Cys86, Cys45/Cys69, Cys54/Cys81, and Cys58/Cys83.

The protein belongs to the DEFL family. Protease inhibitor I18 (RTI/MTI-2) subfamily.

It localises to the secreted. This chain is Defensin-like protein 193 (ATTI2), found in Arabidopsis thaliana (Mouse-ear cress).